A 243-amino-acid chain; its full sequence is Terpene cyclase janB (243 aa).

7 helical membrane passes run 19 to 39, 48 to 68, 77 to 97, 112 to 132, 134 to 154, 172 to 194, and 205 to 225; these read LADL…VGMV, YGMA…YCVF, LGVF…AIIF, LPWI…ALAA, IGPS…LSVG, LWLS…WMYW, and LVLW…VCFW.

This sequence belongs to the paxB family.

Its subcellular location is the membrane. Its pathway is secondary metabolite biosynthesis. Terpene cyclase; part of the gene cluster that mediates the biosynthesis of the indole diterpenes janthitremanes such as shearinine K or shearinine A. The geranylgeranyl diphosphate (GGPP) synthase janG catalyzes the first step in janthitremane biosynthesis via conversion of farnesyl pyrophosphate and isopentyl pyrophosphate into geranylgeranyl pyrophosphate (GGPP). Condensation of indole-3-glycerol phosphate with GGPP by the prenyl transferase janC then forms 3-geranylgeranylindole (3-GGI). Epoxidation by the FAD-dependent monooxygenase janM leads to a epoxidized-GGI that is substrate of the terpene cyclase janB for cyclization to yield paspaline. Paspaline is subsequently converted to 13-desoxypaspaline by the cytochrome P450 monooxygenase janP, via beta-PC-M6 in a series of alpha-face oxidations. The cytochrome P450 monooxygenase janQ is proposed to carry out sequential beta-face oxidation steps at C-7 and C-13 of 13-desoxypaspaline to form paspalicine and paspalinine respectively. The indole diterpene prenyltransferase janD may then convert paspalinine into shearinine K which is substrate of janO and/or additional enzymes for oxidation and cyclization to generate shearinine A. This chain is Terpene cyclase janB, found in Penicillium janthinellum (Penicillium vitale).